A 522-amino-acid chain; its full sequence is Subtilisin-like protease 10 (522 aa).

A signal peptide spans 1-19 (MFFFKGVVAVLSFFSAVNA). The propeptide occupies 20 to 117 (APFMKPNNGT…VERDQIGTSQ (98 aa)). In terms of domain architecture, Inhibitor I9 spans 36-113 (SYIVLLKRDI…HVAHVERDQI (78 aa)). In terms of domain architecture, Peptidase S8 spans 127–405 (NWGLGRLSNS…KLLVNGANGT (279 aa)). Residues D159 and H190 each act as charge relay system in the active site. N-linked (GlcNAc...) asparagine glycosylation occurs at N251. The active-site Charge relay system is S348. Polar residues predominate over residues 383-397 (SASVKNPGPNTTNKL). The tract at residues 383 to 515 (SASVKNPGPN…GWNRPMWWNR (133 aa)) is disordered. N-linked (GlcNAc...) asparagine glycosylation is found at N392 and N403. Residues 432-459 (SQNPPPGQNPPPGQNPPPEQPAPSPPAN) show a composition bias toward pro residues.

This sequence belongs to the peptidase S8 family.

The protein localises to the secreted. Its function is as follows. Secreted subtilisin-like serine protease with keratinolytic activity that contributes to pathogenicity. This chain is Subtilisin-like protease 10 (SUB10), found in Trichophyton verrucosum (strain HKI 0517).